Consider the following 316-residue polypeptide: Ferrochelatase (316 aa).

Fe cation is bound by residues His-188 and Glu-269.

Belongs to the ferrochelatase family.

It localises to the cytoplasm. The catalysed reaction is heme b + 2 H(+) = protoporphyrin IX + Fe(2+). It functions in the pathway porphyrin-containing compound metabolism; protoheme biosynthesis; protoheme from protoporphyrin-IX: step 1/1. Its function is as follows. Catalyzes the ferrous insertion into protoporphyrin IX. The polypeptide is Ferrochelatase (Wolinella succinogenes (strain ATCC 29543 / DSM 1740 / CCUG 13145 / JCM 31913 / LMG 7466 / NCTC 11488 / FDC 602W) (Vibrio succinogenes)).